Consider the following 366-residue polypeptide: Ribosomal RNA large subunit methyltransferase M (366 aa).

S-adenosyl-L-methionine-binding positions include serine 188, 221 to 224, aspartate 240, aspartate 260, and aspartate 277; that span reads CPGG. Catalysis depends on lysine 306, which acts as the Proton acceptor.

The protein belongs to the class I-like SAM-binding methyltransferase superfamily. RNA methyltransferase RlmE family. RlmM subfamily. In terms of assembly, monomer.

The protein localises to the cytoplasm. It carries out the reaction cytidine(2498) in 23S rRNA + S-adenosyl-L-methionine = 2'-O-methylcytidine(2498) in 23S rRNA + S-adenosyl-L-homocysteine + H(+). Its function is as follows. Catalyzes the 2'-O-methylation at nucleotide C2498 in 23S rRNA. This is Ribosomal RNA large subunit methyltransferase M from Pectobacterium carotovorum subsp. carotovorum (strain PC1).